The primary structure comprises 673 residues: UvrABC system protein B (673 aa).

Residues 26–183 (EGLEDGLAHQ…RRLAELQYTR (158 aa)) enclose the Helicase ATP-binding domain. An ATP-binding site is contributed by 39–46 (GVTGSGKT). Residues 92 to 115 (YYDYYQPEAYVPSSDTFIEKDASV) carry the Beta-hairpin motif. The Helicase C-terminal domain maps to 431–597 (QVDDLLSEIR…GLNKKVVDIL (167 aa)). In terms of domain architecture, UVR spans 633–668 (QQKIHELEGQMMQHAQNLEFEEAAQIRDQLHQLREL).

Belongs to the UvrB family. In terms of assembly, forms a heterotetramer with UvrA during the search for lesions. Interacts with UvrC in an incision complex.

It localises to the cytoplasm. Its function is as follows. The UvrABC repair system catalyzes the recognition and processing of DNA lesions. A damage recognition complex composed of 2 UvrA and 2 UvrB subunits scans DNA for abnormalities. Upon binding of the UvrA(2)B(2) complex to a putative damaged site, the DNA wraps around one UvrB monomer. DNA wrap is dependent on ATP binding by UvrB and probably causes local melting of the DNA helix, facilitating insertion of UvrB beta-hairpin between the DNA strands. Then UvrB probes one DNA strand for the presence of a lesion. If a lesion is found the UvrA subunits dissociate and the UvrB-DNA preincision complex is formed. This complex is subsequently bound by UvrC and the second UvrB is released. If no lesion is found, the DNA wraps around the other UvrB subunit that will check the other stand for damage. The sequence is that of UvrABC system protein B from Salmonella heidelberg (strain SL476).